We begin with the raw amino-acid sequence, 105 residues long: Small ribosomal subunit protein bS20 (105 aa).

This sequence belongs to the bacterial ribosomal protein bS20 family.

In terms of biological role, binds directly to 16S ribosomal RNA. The polypeptide is Small ribosomal subunit protein bS20 (Moorella thermoacetica (strain ATCC 39073 / JCM 9320)).